The following is a 79-amino-acid chain: D-alanyl carrier protein (79 aa).

A Carrier domain is found at 1–77 (MDIKAEVIEI…KIVEGVTELR (77 aa)). O-(pantetheine 4'-phosphoryl)serine is present on Ser-35.

The protein belongs to the DltC family. In terms of processing, 4'-phosphopantetheine is transferred from CoA to a specific serine of apo-DCP.

Its subcellular location is the cytoplasm. The protein operates within cell wall biogenesis; lipoteichoic acid biosynthesis. Carrier protein involved in the D-alanylation of lipoteichoic acid (LTA). The loading of thioester-linked D-alanine onto DltC is catalyzed by D-alanine--D-alanyl carrier protein ligase DltA. The DltC-carried D-alanyl group is further transferred to cell membrane phosphatidylglycerol (PG) by forming an ester bond, probably catalyzed by DltD. D-alanylation of LTA plays an important role in modulating the properties of the cell wall in Gram-positive bacteria, influencing the net charge of the cell wall. The chain is D-alanyl carrier protein from Streptococcus sanguinis (strain SK36).